The primary structure comprises 489 residues: Threonine/serine exporter (489 aa).

A run of 10 helical transmembrane segments spans residues 151–171 (GFPVALLGWAMMGGAVAVLLG), 174–194 (WQVSLIAFITAFTIIATTSFL), 206–226 (VVGGFIATLPASIAYSLALQF), 233–253 (SQIIASGIVVLLAGLTLVQSL), 268–288 (FFETLLFTGGIVAGVGLGIQL), 314–334 (IIAGGVTAAAFAVGCYAEWSS), 335–355 (VIIAGLTALMGSAFYYLFVVY), 356–376 (LGPVSAAAIAATAVGFTGGLL), 381–401 (LIPPLIVAIAGITPMLPGLAI), and 420–440 (IAVALATASSLAAGVVLGEWI). Positions 464–489 (FQEEAEQNQRRQRKRPKTNQRFGNKR) are disordered. The segment covering 473-489 (RRQRKRPKTNQRFGNKR) has biased composition (basic residues).

This sequence belongs to the ThrE exporter (TC 2.A.79) family.

It localises to the cell membrane. It carries out the reaction L-threonine(in) + H(+)(out) = L-threonine(out) + H(+)(in). With respect to regulation, transport is inhibited by the proton ionophore carbonyl cyanide m-chlorophenylhydrazone (CCCP). Its function is as follows. Catalyzes the export of L-threonine and L-serine from the cell to the extracellular environment. Export is dependent on the proton motive force. This chain is Threonine/serine exporter, found in Corynebacterium glutamicum (Brevibacterium saccharolyticum).